The chain runs to 330 residues: tRNA-modifying protein YgfZ (330 aa).

Folate is bound by residues Trp-28 and Trp-190.

The protein belongs to the tRNA-modifying YgfZ family.

Its subcellular location is the cytoplasm. Its function is as follows. Folate-binding protein involved in regulating the level of ATP-DnaA and in the modification of some tRNAs. It is probably a key factor in regulatory networks that act via tRNA modification, such as initiation of chromosomal replication. The polypeptide is tRNA-modifying protein YgfZ (Yersinia pseudotuberculosis serotype O:1b (strain IP 31758)).